Consider the following 599-residue polypeptide: Sulfite reductase [NADPH] flavoprotein alpha-component (599 aa).

Positions I64–V202 constitute a Flavodoxin-like domain. Residues S70 to A75, S117 to G120, and L153 to C162 contribute to the FMN site. Positions D234–P448 constitute an FAD-binding FR-type domain. FAD-binding positions include T322, A356, R386–S389, T404–G406, Y410, and G419–S422. Residues S519 to R520, K525 to Q529, and D561 contribute to the NADP(+) site. An FAD-binding site is contributed by Y599.

It belongs to the NADPH-dependent sulphite reductase flavoprotein subunit CysJ family. The protein in the N-terminal section; belongs to the flavodoxin family. In the C-terminal section; belongs to the flavoprotein pyridine nucleotide cytochrome reductase family. As to quaternary structure, alpha(8)-beta(8). The alpha component is a flavoprotein, the beta component is a hemoprotein. FAD serves as cofactor. FMN is required as a cofactor.

The catalysed reaction is hydrogen sulfide + 3 NADP(+) + 3 H2O = sulfite + 3 NADPH + 4 H(+). Its pathway is sulfur metabolism; hydrogen sulfide biosynthesis; hydrogen sulfide from sulfite (NADPH route): step 1/1. Component of the sulfite reductase complex that catalyzes the 6-electron reduction of sulfite to sulfide. This is one of several activities required for the biosynthesis of L-cysteine from sulfate. The flavoprotein component catalyzes the electron flow from NADPH -&gt; FAD -&gt; FMN to the hemoprotein component. The chain is Sulfite reductase [NADPH] flavoprotein alpha-component from Shigella dysenteriae serotype 1 (strain Sd197).